A 215-amino-acid chain; its full sequence is Glutathione S-transferase-like protein (215 aa).

Residues 1-76 enclose the GST N-terminal domain; sequence MPNARILKIQ…YVAASGPAAP (76 aa). A GST C-terminal domain is found at 82 to 215; the sequence is NVAEQAAVRQ…LVAVRKEASV (134 aa).

Belongs to the GST superfamily.

This chain is Glutathione S-transferase-like protein, found in Aspergillus aculeatus (strain ATCC 16872 / CBS 172.66 / WB 5094).